A 465-amino-acid chain; its full sequence is Glutamate--tRNA ligase (465 aa).

Residues Pro-8–Gly-18 carry the 'HIGH' region motif. Positions Arg-235 to Arg-239 match the 'KMSKS' region motif. Position 238 (Lys-238) interacts with ATP.

This sequence belongs to the class-I aminoacyl-tRNA synthetase family. Glutamate--tRNA ligase type 1 subfamily. In terms of assembly, monomer.

The protein localises to the cytoplasm. It carries out the reaction tRNA(Glu) + L-glutamate + ATP = L-glutamyl-tRNA(Glu) + AMP + diphosphate. Catalyzes the attachment of glutamate to tRNA(Glu) in a two-step reaction: glutamate is first activated by ATP to form Glu-AMP and then transferred to the acceptor end of tRNA(Glu). This is Glutamate--tRNA ligase from Dichelobacter nodosus (strain VCS1703A).